A 910-amino-acid polypeptide reads, in one-letter code: Protein translocase subunit SecA (910 aa).

ATP is bound by residues Gln87, 105–109 (GEGKT), and Asp508. A disordered region spans residues 848 to 910 (RLSQSQFQHQ…KYKHCHGQLS (63 aa)). The span at 869–880 (AQVQAAQQGVAQ) shows a compositional bias: low complexity. 4 residues coordinate Zn(2+): Cys894, Cys896, Cys905, and His906. Basic residues predominate over residues 900 to 910 (KKYKHCHGQLS).

Belongs to the SecA family. As to quaternary structure, monomer and homodimer. Part of the essential Sec protein translocation apparatus which comprises SecA, SecYEG and auxiliary proteins SecDF-YajC and YidC. It depends on Zn(2+) as a cofactor.

It is found in the cell inner membrane. Its subcellular location is the cytoplasm. It catalyses the reaction ATP + H2O + cellular proteinSide 1 = ADP + phosphate + cellular proteinSide 2.. Part of the Sec protein translocase complex. Interacts with the SecYEG preprotein conducting channel. Has a central role in coupling the hydrolysis of ATP to the transfer of proteins into and across the cell membrane, serving both as a receptor for the preprotein-SecB complex and as an ATP-driven molecular motor driving the stepwise translocation of polypeptide chains across the membrane. The polypeptide is Protein translocase subunit SecA (Stenotrophomonas maltophilia (strain K279a)).